A 124-amino-acid chain; its full sequence is Small ribosomal subunit protein uS12 (124 aa).

3-methylthioaspartic acid is present on aspartate 89.

It belongs to the universal ribosomal protein uS12 family. As to quaternary structure, part of the 30S ribosomal subunit. Contacts proteins S8 and S17. May interact with IF1 in the 30S initiation complex.

In terms of biological role, with S4 and S5 plays an important role in translational accuracy. Functionally, interacts with and stabilizes bases of the 16S rRNA that are involved in tRNA selection in the A site and with the mRNA backbone. Located at the interface of the 30S and 50S subunits, it traverses the body of the 30S subunit contacting proteins on the other side and probably holding the rRNA structure together. The combined cluster of proteins S8, S12 and S17 appears to hold together the shoulder and platform of the 30S subunit. This chain is Small ribosomal subunit protein uS12, found in Haemophilus ducreyi (strain 35000HP / ATCC 700724).